A 420-amino-acid chain; its full sequence is UDP-N-acetylglucosamine 1-carboxyvinyltransferase 2 (420 aa).

Lysine 22–asparagine 23 serves as a coordination point for phosphoenolpyruvate. Arginine 92 contributes to the UDP-N-acetyl-alpha-D-glucosamine binding site. Catalysis depends on cysteine 116, which acts as the Proton donor. Cysteine 116 is subject to 2-(S-cysteinyl)pyruvic acid O-phosphothioketal. UDP-N-acetyl-alpha-D-glucosamine-binding positions include arginine 121 to leucine 125, aspartate 307, and isoleucine 329.

This sequence belongs to the EPSP synthase family. MurA subfamily.

Its subcellular location is the cytoplasm. The catalysed reaction is phosphoenolpyruvate + UDP-N-acetyl-alpha-D-glucosamine = UDP-N-acetyl-3-O-(1-carboxyvinyl)-alpha-D-glucosamine + phosphate. The protein operates within cell wall biogenesis; peptidoglycan biosynthesis. Cell wall formation. Adds enolpyruvyl to UDP-N-acetylglucosamine. This Streptococcus thermophilus (strain CNRZ 1066) protein is UDP-N-acetylglucosamine 1-carboxyvinyltransferase 2.